Here is a 441-residue protein sequence, read N- to C-terminus: Velvet complex subunit B (441 aa).

The Velvet domain maps to 1–173; the sequence is MSTLGQGDFE…SDQGVRLRLR (173 aa). 3 disordered regions span residues 200 to 220, 234 to 295, and 341 to 396; these read GYLP…PHHL, RSRS…ETDT, and MPSP…PSYA. Low complexity-rich tracts occupy residues 272 to 283 and 361 to 375; these read DGASPDSPHPSS and PAGA…FSPG.

Belongs to the velvet family. VelB subfamily. In terms of assembly, component of the heterotrimeric velvet complex composed of laeA, veA and velB; VeA acting as a bridging protein between laeA and velB.

The protein localises to the nucleus. It localises to the cytoplasm. In terms of biological role, component of the velvet transcription factor complex that controls sexual/asexual developmental ratio in response to light, promoting sexual development in the darkness while stimulating asexual sporulation under illumination. The velvet complex acts as a global regulator for secondary metabolite gene expression and is required for the production of chaetoglobosin A. The sequence is that of Velvet complex subunit B from Chaetomium globosum (strain ATCC 6205 / CBS 148.51 / DSM 1962 / NBRC 6347 / NRRL 1970) (Soil fungus).